The primary structure comprises 213 residues: ATP-dependent Clp protease proteolytic subunit 3 (213 aa).

Residue Ser-107 is the Nucleophile of the active site. The active site involves His-132.

This sequence belongs to the peptidase S14 family. As to quaternary structure, fourteen ClpP subunits assemble into 2 heptameric rings which stack back to back to give a disk-like structure with a central cavity, resembling the structure of eukaryotic proteasomes.

It localises to the cytoplasm. It catalyses the reaction Hydrolysis of proteins to small peptides in the presence of ATP and magnesium. alpha-casein is the usual test substrate. In the absence of ATP, only oligopeptides shorter than five residues are hydrolyzed (such as succinyl-Leu-Tyr-|-NHMec, and Leu-Tyr-Leu-|-Tyr-Trp, in which cleavage of the -Tyr-|-Leu- and -Tyr-|-Trp bonds also occurs).. In terms of biological role, cleaves peptides in various proteins in a process that requires ATP hydrolysis. Has a chymotrypsin-like activity. Plays a major role in the degradation of misfolded proteins. This Frankia casuarinae (strain DSM 45818 / CECT 9043 / HFP020203 / CcI3) protein is ATP-dependent Clp protease proteolytic subunit 3.